Consider the following 965-residue polypeptide: SKI family transcriptional corepressor 1 (965 aa).

6 disordered regions span residues Thr45–Leu72, Arg278–Ala367, Asp410–Ala458, Ser530–Val592, Ala615–Glu777, and Val796–Leu843. Composition is skewed to gly residues over residues Gln283 to Cys312, Gly356 to Ala367, and Glu418 to Gly442. The segment covering Leu571–Ala586 has biased composition (pro residues). A compositionally biased stretch (gly residues) spans Pro620–Gly632. Positions Glu641 to Ser650 are enriched in polar residues. 2 stretches are compositionally biased toward acidic residues: residues Asp654–Val663 and Asp670–Glu679. The span at Glu800 to Pro823 shows a compositional bias: basic and acidic residues. Residues Asp824–Asn835 show a composition bias toward polar residues. Residues Glu858–Glu922 adopt a coiled-coil conformation.

This sequence belongs to the SKI family. In terms of assembly, interacts with LBX1. Interacts with SMAD1, SMAD2 and SMAD3. In terms of tissue distribution, present specifically in cerebellar Purkinje cells (at protein level).

It localises to the nucleus. Its function is as follows. Acts as a transcriptional corepressor of LBX1. Inhibits BMP signaling. The sequence is that of SKI family transcriptional corepressor 1 (SKOR1) from Homo sapiens (Human).